The sequence spans 423 residues: uncharacterized protein (423 aa).

Positions 383 to 423 are disordered; it reads ARGTTGGGGTRSGTSTDGQEDGRKPPVVVIREQPPPGNPPR.

This sequence belongs to the mycobacterial PPE family.

This is an uncharacterized protein from Mycobacterium tuberculosis (strain CDC 1551 / Oshkosh).